The chain runs to 112 residues: Protein Churchill (112 aa).

Zn(2+) is bound by residues cysteine 2, cysteine 5, cysteine 30, cysteine 33, histidine 59, cysteine 61, cysteine 64, histidine 66, histidine 71, cysteine 88, and cysteine 91.

This sequence belongs to the Churchill family.

Transcriptional activator that mediates FGF signaling during neural development. Plays a role in the regulation of cell movement. Does not bind DNA by itself. This chain is Protein Churchill (Churc1), found in Mus musculus (Mouse).